We begin with the raw amino-acid sequence, 160 residues long: Ribosome maturation factor RimP (160 aa).

The protein belongs to the RimP family.

It is found in the cytoplasm. Its function is as follows. Required for maturation of 30S ribosomal subunits. This chain is Ribosome maturation factor RimP, found in Orientia tsutsugamushi (strain Ikeda) (Rickettsia tsutsugamushi).